The primary structure comprises 324 residues: MKMLDKTLPLEELESSLTKTESKAYYLSKLVYRHDKVVNNKAHILQRKLLNLKKQLFYGLTSYQKLCVARHKRRPTTLDYIEYLLDSWIELHGDRRGSDDPAIITGIGRIGRRSVVVLGQQKGRNTKENVLRNFGMSSPGGYRKALRVMEHANKFKLPILTFIDTPGALAGVSAEKSGQAEAIATNLKKMFSFEVPIISTIIGEGGSGGALGICIGNYVMMFENSIYTVATPEACSSILWKDSTKAADAAEALKVRAEDLLTLKIIDEIIPEPFGVAHDYPLLMVRILKNKIRDQLDFFDTFSPSELKHHRYLKFRKLGLYYDC.

The region spanning 44-298 (ILQRKLLNLK…KNKIRDQLDF (255 aa)) is the CoA carboxyltransferase C-terminal domain.

This sequence belongs to the AccA family. In terms of assembly, acetyl-CoA carboxylase is a heterohexamer composed of biotin carboxyl carrier protein (accB), biotin carboxylase (accC) and two subunits each of ACCase subunit alpha (accA) and ACCase subunit beta (accD).

The protein resides in the plastid. The protein localises to the chloroplast. It carries out the reaction N(6)-carboxybiotinyl-L-lysyl-[protein] + acetyl-CoA = N(6)-biotinyl-L-lysyl-[protein] + malonyl-CoA. It functions in the pathway lipid metabolism; malonyl-CoA biosynthesis; malonyl-CoA from acetyl-CoA: step 1/1. Its function is as follows. Component of the acetyl coenzyme A carboxylase (ACC) complex. First, biotin carboxylase catalyzes the carboxylation of biotin on its carrier protein (BCCP) and then the CO(2) group is transferred by the carboxyltransferase to acetyl-CoA to form malonyl-CoA. The polypeptide is Acetyl-coenzyme A carboxylase carboxyl transferase subunit alpha (Cyanidium caldarium (Red alga)).